The sequence spans 676 residues: LIM domain-containing protein 1 (676 aa).

The mediates nuclear export stretch occupies residues 54–134 (KIHLQQQQQQ…PPYPPQEQRS (81 aa)). Disordered stretches follow at residues 104–163 (KPPL…SAFH) and 189–389 (KWGD…TSLV). At S145 the chain carries Phosphoserine. The interval 186 to 260 (ASPKWGDKPG…IGGRSSEKPT (75 aa)) is interaction with EGLN1/PHD2. 2 stretches are compositionally biased toward low complexity: residues 201–213 (GLSV…SSPG) and 232–242 (LSLSSSRSSEG). Residues S233 and S239 each carry the phosphoserine modification. The segment covering 243–253 (SLGGQNSGIGG) has biased composition (gly residues). Residues 262–271 (LWSTASSQRV) show a composition bias toward polar residues. Residues S272, S277, S304, and S316 each carry the phosphoserine modification. Positions 343-360 (SYLSSSAPSSSPAGLDGS) are enriched in low complexity. Residues 404–442 (GPLGWSSDGSLGSVLLDSPSSPRVRLPCQPLVPGPELRP) form an interaction with RB1 region. Phosphoserine is present on residues S421 and S424. LIM zinc-binding domains are found at residues 470-531 (GACV…SGFQ), 535-595 (DRCF…VLAP), and 595-664 (PKCA…RLEK). The tract at residues 472–676 (CVKCSKGVFG…SSTALHQHHF (205 aa)) is necessary for nuclear localization.

This sequence belongs to the zyxin/ajuba family. In terms of assembly, interacts (via LIM domains) with TRAF6. Found in a complex with TRAF6, PRKCZ and SQSTM1. Interacts (via LIM domains) SNAI2/SLUG (via SNAG domain) and SCRT1 (via SNAG domain). Interacts with SQSTM1 and RB1. Found in a complex composed of LIMD1, VHL, EGLN1/PHD2, ELOB and CUL2. Interacts with EIF4E, AGO1, AGO2, DCP2, DDX6, LATS1, LATS2, EGLN1/PHD2, EGLN2/PHD1 and EGLN3/PHD3. Interacts (via LIM zinc-binding 2) with isoform 1 and isoform 3 of VHL. Interacts (via LIM domains) with SNAI1 (via SNAG domain). Phosphorylated during mitosis. As to expression, expressed in normal and breast cancer tissues (at protein level). Ubiquitous.

The protein localises to the cytoplasm. It is found in the nucleus. Its subcellular location is the P-body. It localises to the cell junction. The protein resides in the adherens junction. The protein localises to the focal adhesion. Adapter or scaffold protein which participates in the assembly of numerous protein complexes and is involved in several cellular processes such as cell fate determination, cytoskeletal organization, repression of gene transcription, cell-cell adhesion, cell differentiation, proliferation and migration. Positively regulates microRNA (miRNA)-mediated gene silencing and is essential for P-body formation and integrity. Acts as a hypoxic regulator by bridging an association between the prolyl hydroxylases and VHL enabling efficient degradation of HIF1A. Acts as a transcriptional corepressor for SNAI1- and SNAI2/SLUG-dependent repression of E-cadherin transcription. Negatively regulates the Hippo signaling pathway and antagonizes phosphorylation of YAP1. Inhibits E2F-mediated transcription, and suppresses the expression of the majority of genes with E2F1-responsive elements. Regulates osteoblast development, function, differentiation and stress osteoclastogenesis. Enhances the ability of TRAF6 to activate adapter protein complex 1 (AP-1) and negatively regulates the canonical Wnt receptor signaling pathway in osteoblasts. May act as a tumor suppressor by inhibiting cell proliferation. The protein is LIM domain-containing protein 1 (LIMD1) of Homo sapiens (Human).